The sequence spans 122 residues: Large ribosomal subunit protein uL14 (122 aa).

This sequence belongs to the universal ribosomal protein uL14 family. In terms of assembly, part of the 50S ribosomal subunit. Forms a cluster with proteins L3 and L19. In the 70S ribosome, L14 and L19 interact and together make contacts with the 16S rRNA in bridges B5 and B8.

Its function is as follows. Binds to 23S rRNA. Forms part of two intersubunit bridges in the 70S ribosome. This is Large ribosomal subunit protein uL14 from Agrobacterium fabrum (strain C58 / ATCC 33970) (Agrobacterium tumefaciens (strain C58)).